The sequence spans 188 residues: Adenine phosphoribosyltransferase (188 aa).

The protein belongs to the purine/pyrimidine phosphoribosyltransferase family. In terms of assembly, homodimer.

It localises to the cytoplasm. The enzyme catalyses AMP + diphosphate = 5-phospho-alpha-D-ribose 1-diphosphate + adenine. The protein operates within purine metabolism; AMP biosynthesis via salvage pathway; AMP from adenine: step 1/1. In terms of biological role, catalyzes a salvage reaction resulting in the formation of AMP, that is energically less costly than de novo synthesis. The polypeptide is Adenine phosphoribosyltransferase (Frankia casuarinae (strain DSM 45818 / CECT 9043 / HFP020203 / CcI3)).